The chain runs to 70 residues: uncharacterized protein (70 aa).

The interval 40-70 (LHQQRTAHKVTSPPSQRPQNSETKSDSQNRS) is disordered. Residues 51 to 61 (SPPSQRPQNSE) are compositionally biased toward polar residues.

This is an uncharacterized protein from Bdellovibrio phage phiMH2K (Bacteriophage phiMH2K).